The chain runs to 124 residues: Galanin peptides (124 aa).

The N-terminal stretch at 1 to 19 is a signal peptide; it reads MARGSVILLGWLLLVVTLS. A propeptide spanning residues 20-30 is cleaved from the precursor; it reads ATLGLGMPAKE. Threonine 61 is subject to Threonine amide. Residues serine 117 and serine 118 each carry the phosphoserine modification.

It belongs to the galanin family. As to expression, expressed in retinal progenitor cells and retinal ganglion cells (at protein level).

It is found in the secreted. Endocrine hormone of the central and peripheral nervous systems that binds and activates the G protein-coupled receptors GALR1, GALR2, and GALR3. This small neuropeptide may regulate diverse physiologic functions including contraction of smooth muscle of the gastrointestinal and genitourinary tract, growth hormone and insulin release and adrenal secretion. The chain is Galanin peptides (Gal) from Mus musculus (Mouse).